A 424-amino-acid chain; its full sequence is Histidine--tRNA ligase (424 aa).

It belongs to the class-II aminoacyl-tRNA synthetase family. Homodimer.

The protein localises to the cytoplasm. The enzyme catalyses tRNA(His) + L-histidine + ATP = L-histidyl-tRNA(His) + AMP + diphosphate + H(+). The sequence is that of Histidine--tRNA ligase from Shewanella piezotolerans (strain WP3 / JCM 13877).